The primary structure comprises 328 residues: Endochitinase (328 aa).

Residues 1-26 form the signal peptide; it reads MRRHKEVNFVAYLLFSLLVLVSAALA. Residues 27–68 form the Chitin-binding type-1 domain; that stretch reads QNCGSQGGGKACASGQCCSKFGWCGNTNDYCGSGNCQSQCPG. 7 disulfides stabilise this stretch: cysteine 29–cysteine 44, cysteine 38–cysteine 50, cysteine 43–cysteine 57, cysteine 62–cysteine 66, cysteine 100–cysteine 162, cysteine 174–cysteine 182, and cysteine 281–cysteine 313. Glutamate 144 acts as the Proton donor in catalysis. The propeptide at 322–328 is removed in mature form; it reads ALLVDTL.

The protein belongs to the glycosyl hydrolase 19 family. Chitinase class I subfamily.

It localises to the vacuole. It carries out the reaction Random endo-hydrolysis of N-acetyl-beta-D-glucosaminide (1-&gt;4)-beta-linkages in chitin and chitodextrins.. Functionally, defense against chitin-containing fungal pathogens. This chain is Endochitinase, found in Solanum tuberosum (Potato).